We begin with the raw amino-acid sequence, 275 residues long: Catechol 1,2-dioxygenase 2 (275 aa).

Fe cation is bound by residues Tyr-158, Tyr-192, His-216, and His-218.

This sequence belongs to the intradiol ring-cleavage dioxygenase family. In terms of assembly, homodimer. Requires Fe(3+) as cofactor.

It catalyses the reaction catechol + O2 = cis,cis-muconate + 2 H(+). Its pathway is aromatic compound metabolism; beta-ketoadipate pathway; 5-oxo-4,5-dihydro-2-furylacetate from catechol: step 1/3. Can cleave 4-methyl-, 4-chloro-, and 3-methoxycatechol at lower rates than catechol, but has no activity with 4-nitrocatechol or protocatechuic acid. This Acinetobacter lwoffii protein is Catechol 1,2-dioxygenase 2 (catA2).